The chain runs to 36 residues: Cytochrome b6-f complex subunit 5 (36 aa).

The chain crosses the membrane as a helical span at residues 5–25 (LLAGIVLGLVPVTLAGLFVAA).

The protein belongs to the PetG family. The 4 large subunits of the cytochrome b6-f complex are cytochrome b6, subunit IV (17 kDa polypeptide, PetD), cytochrome f and the Rieske protein, while the 4 small subunits are PetG, PetL, PetM and PetN. The complex functions as a dimer.

The protein resides in the cellular thylakoid membrane. Component of the cytochrome b6-f complex, which mediates electron transfer between photosystem II (PSII) and photosystem I (PSI), cyclic electron flow around PSI, and state transitions. PetG is required for either the stability or assembly of the cytochrome b6-f complex. The polypeptide is Cytochrome b6-f complex subunit 5 (Acaryochloris marina (strain MBIC 11017)).